We begin with the raw amino-acid sequence, 778 residues long: Ral guanine nucleotide dissociation stimulator-like 2 (778 aa).

Low complexity predominate over residues 1-15; it reads MLPRPLRLLLDTTPP. Residues 1–59 are disordered; the sequence is MLPRPLRLLLDTTPPGGVVLSSFRSRDPEEGGDPGGRAVGGGQEEEDEEEEEASVSVWD. Residues 33 to 42 are compositionally biased toward gly residues; that stretch reads DPGGRAVGGG. A compositionally biased stretch (acidic residues) spans 43 to 59; sequence QEEEDEEEEEASVSVWD. The region spanning 88–212 is the N-terminal Ras-GEF domain; it reads SSRRLRAGTL…GSADLIRNLR (125 aa). One can recognise a Ras-GEF domain in the interval 243 to 513; it reads LADHLAEQLT…HRVSCEVEPP (271 aa). Disordered stretches follow at residues 503 to 524, 541 to 564, 581 to 647, and 735 to 769; these read SHRV…ARTP, GGPT…GTPA, SLDS…GPGS, and RRPS…IKAT. A compositionally biased stretch (low complexity) spans 581-592; that stretch reads SLDSALESSPSL. The span at 620–632 shows a compositional bias: polar residues; sequence CGSPLSGNTGEGT. A Ras-associating domain is found at 649 to 736; it reads DCRIIRVQME…HDFLLRQRRR (88 aa). Residues 738–756 are compositionally biased toward low complexity; it reads SAATPGSHSGPSASGTPPS.

In terms of assembly, interacts with SAMD9.

In terms of biological role, probable guanine nucleotide exchange factor. Putative effector of Ras and/or Rap. Associates with the GTP-bound form of Rap 1A and H-Ras in vitro. This Mus musculus (Mouse) protein is Ral guanine nucleotide dissociation stimulator-like 2 (Rgl2).